The chain runs to 181 residues: Shikimate kinase (181 aa).

Position 17–22 (G17–T22) interacts with ATP. T21 contributes to the Mg(2+) binding site. Residues D39, R63, and G85 each coordinate substrate. R122 contacts ATP. R141 is a substrate binding site.

The protein belongs to the shikimate kinase family. As to quaternary structure, monomer. Requires Mg(2+) as cofactor.

It is found in the cytoplasm. It carries out the reaction shikimate + ATP = 3-phosphoshikimate + ADP + H(+). It participates in metabolic intermediate biosynthesis; chorismate biosynthesis; chorismate from D-erythrose 4-phosphate and phosphoenolpyruvate: step 5/7. Catalyzes the specific phosphorylation of the 3-hydroxyl group of shikimic acid using ATP as a cosubstrate. In Nostoc punctiforme (strain ATCC 29133 / PCC 73102), this protein is Shikimate kinase.